We begin with the raw amino-acid sequence, 906 residues long: MLSLVQKIIGSRNERFIKKVSRIVQKINSLEPEFEKLSDEQLKAKTFEYRERLANGEILDNLLPEAFATVREAGKRTKNMRHYDVQLIGGIVLHQGKVAEMRTGEGKTLVATLPAYLNALTGDGVHVITVNDYLAKRDAELMSDIYEFLGMSVGVIVADLNPQQRKEAYACDITYGTNNEFGFDYLRDNMAYEKEQQVQRSRNYVIIDEVDSILIDEARTPLIISGASDDRSEMYNLFNRLVPYLEKQEKEEVENEQEQRDFYVDEKSKNAYLTEKGYAKIENMLKKEGILEEDDNLYSPHNITKMHYLNACLRAHSLYQLNIDYIVRDQEIVIIDESTGRAMPGRRWSDGLHQAIEAKEGVKINAENQTMASITFQNFFKLYNKIAGMTGTADTEAFELHSIYGLEVIIIPTNKPMIRKDHHDEIYGSVREKFDAIVEDIKERISKGQPVLVGTASIEASEVLSTLLKKKKIRHNVLNAKQHEKEASIIAMAGYPDNVTIATNMAGRGTDIILGGNLEVEIAQLEDPTPEDIAQIKAEWLKRNEAVKKAGGLCIIGSERHDSRRIDNQLRGRAARQGDPGESKFYLSMDDNLLRIFASQRMAERVKKGLKGGESLAFGFMSKVISKAQGKVESYHFDIRKNLLEYDNVVNTQRKVIYEQRQSFLEAEDVSDILADIRIDVAEQLFHDYVPAGSMHELWDLEGLEKALKSDFMIELDLQKLYEEDDSLGEEDLKRLVREAIEIEFVEKTKNLDSGAVRQFEKFSLLQSLDTHWREHLSSIDHLRNSINLRGYAQKDPKNEYKKEAFELFSTMLDNFKYEVISSLAKIRIATEEETQRAQQEWQESMSDIKAEHESVIDNNQRHDEDEQEEAPKVKQVRREGPKVKRNDPCPCGSGKKYKQCHSKVE.

ATP-binding positions include Gln-86, 104–108 (GEGKT), and Asp-511. Positions 852 to 888 (EHESVIDNNQRHDEDEQEEAPKVKQVRREGPKVKRND) are enriched in basic and acidic residues. A disordered region spans residues 852 to 906 (EHESVIDNNQRHDEDEQEEAPKVKQVRREGPKVKRNDPCPCGSGKKYKQCHSKVE). Zn(2+) is bound by residues Cys-890, Cys-892, Cys-901, and His-902. Over residues 896–906 (KKYKQCHSKVE) the composition is skewed to basic residues.

Belongs to the SecA family. As to quaternary structure, monomer and homodimer. Part of the essential Sec protein translocation apparatus which comprises SecA, SecYEG and auxiliary proteins SecDF-YajC and YidC. Requires Zn(2+) as cofactor.

It localises to the cell inner membrane. It is found in the cytoplasm. The enzyme catalyses ATP + H2O + cellular proteinSide 1 = ADP + phosphate + cellular proteinSide 2.. Its function is as follows. Part of the Sec protein translocase complex. Interacts with the SecYEG preprotein conducting channel. Has a central role in coupling the hydrolysis of ATP to the transfer of proteins into and across the cell membrane, serving both as a receptor for the preprotein-SecB complex and as an ATP-driven molecular motor driving the stepwise translocation of polypeptide chains across the membrane. This is Protein translocase subunit SecA from Francisella tularensis subsp. tularensis (strain SCHU S4 / Schu 4).